The sequence spans 141 residues: Hemoglobin subunit alpha (141 aa).

The region spanning 1 to 141 is the Globin domain; that stretch reads VLSSKDKANI…VSTVLTSKYR (141 aa). At serine 3 the chain carries Phosphoserine. 2 positions are modified to N6-succinyllysine: lysine 7 and lysine 11. Position 16 is an N6-acetyllysine; alternate (lysine 16). Lysine 16 is subject to N6-succinyllysine; alternate. Residue tyrosine 24 is modified to Phosphotyrosine. Residue lysine 40 is modified to N6-succinyllysine. Phosphoserine is present on serine 49. Histidine 58 provides a ligand contact to O2. Histidine 87 is a binding site for heme b. Position 102 is a phosphoserine (serine 102). Threonine 108 carries the post-translational modification Phosphothreonine. The residue at position 124 (serine 124) is a Phosphoserine. 2 positions are modified to phosphothreonine: threonine 134 and threonine 137. The residue at position 138 (serine 138) is a Phosphoserine.

Belongs to the globin family. In terms of assembly, heterotetramer of two alpha chains and two beta chains. In terms of tissue distribution, red blood cells.

Its function is as follows. Involved in oxygen transport from the lung to the various peripheral tissues. Hemopressin acts as an antagonist peptide of the cannabinoid receptor CNR1. Hemopressin-binding efficiently blocks cannabinoid receptor CNR1 and subsequent signaling. The chain is Hemoglobin subunit alpha (HBA) from Vicugna pacos (Alpaca).